A 328-amino-acid chain; its full sequence is Biotin synthase (328 aa).

The Radical SAM core domain occupies 48–278 (FTGNSASLCS…GKSLSVCGGR (231 aa)). [4Fe-4S] cluster contacts are provided by cysteine 66, cysteine 70, and cysteine 73. Positions 143 and 203 each coordinate [2Fe-2S] cluster.

Belongs to the radical SAM superfamily. Biotin synthase family. Homodimer. [4Fe-4S] cluster serves as cofactor. It depends on [2Fe-2S] cluster as a cofactor.

The enzyme catalyses (4R,5S)-dethiobiotin + (sulfur carrier)-SH + 2 reduced [2Fe-2S]-[ferredoxin] + 2 S-adenosyl-L-methionine = (sulfur carrier)-H + biotin + 2 5'-deoxyadenosine + 2 L-methionine + 2 oxidized [2Fe-2S]-[ferredoxin]. It participates in cofactor biosynthesis; biotin biosynthesis; biotin from 7,8-diaminononanoate: step 2/2. Functionally, catalyzes the conversion of dethiobiotin (DTB) to biotin by the insertion of a sulfur atom into dethiobiotin via a radical-based mechanism. The chain is Biotin synthase from Pelobacter propionicus (strain DSM 2379 / NBRC 103807 / OttBd1).